The following is a 361-amino-acid chain: Putative F-box protein At3g19560 (361 aa).

In terms of domain architecture, F-box spans 3-49; the sequence is MTMMSDISQDLLEEILSRVPITSLRAVKSTCKRWKDLLNDPSFSKKY.

The polypeptide is Putative F-box protein At3g19560 (Arabidopsis thaliana (Mouse-ear cress)).